The following is a 450-amino-acid chain: Zinc finger protein 446 (450 aa).

The 83-residue stretch at 26 to 108 (RLRFRGFCYQ…ALVEGLQHDP (83 aa)) folds into the SCAN box domain. Lys130 participates in a covalent cross-link: Glycyl lysine isopeptide (Lys-Gly) (interchain with G-Cter in SUMO2). Disordered stretches follow at residues 130 to 155 (KTEE…QDTR) and 168 to 205 (EEPN…SFHP). Residue Ser137 is modified to Phosphoserine. The KRAB domain maps to 208-254 (IQEEWGLLDRSQKELYWDAMLEKYGTVVSLGLPPHQPEAQAQSELGM). Ser218 carries the phosphoserine modification. Disordered regions lie at residues 263–331 (RSLR…PRKP) and 354–389 (HTSG…RRSL). The span at 275 to 286 (PGCPEAQPPQGP) shows a compositional bias: pro residues. Residues 287 to 306 (GPAAWEGLSGAATPAPTVRP) are compositionally biased toward low complexity. A Phosphothreonine modification is found at Thr308. Residue Lys330 forms a Glycyl lysine isopeptide (Lys-Gly) (interchain with G-Cter in SUMO2) linkage. 3 C2H2-type zinc fingers span residues 332-359 (YTCE…SGPG), 395-422 (YPCE…GQRR), and 423-450 (HFCS…PEVP).

It belongs to the krueppel C2H2-type zinc-finger protein family.

The protein localises to the nucleus. May be involved in transcriptional regulation. The chain is Zinc finger protein 446 (ZNF446) from Homo sapiens (Human).